Here is a 305-residue protein sequence, read N- to C-terminus: UDP-N-acetylenolpyruvoylglucosamine reductase (305 aa).

Residues 33–198 (RVGGPAQVLF…TGGTFRGRRA (166 aa)) form the FAD-binding PCMH-type domain. R178 is an active-site residue. The Proton donor role is filled by S227. Residue E297 is part of the active site.

It belongs to the MurB family. Requires FAD as cofactor.

Its subcellular location is the cytoplasm. It carries out the reaction UDP-N-acetyl-alpha-D-muramate + NADP(+) = UDP-N-acetyl-3-O-(1-carboxyvinyl)-alpha-D-glucosamine + NADPH + H(+). It functions in the pathway cell wall biogenesis; peptidoglycan biosynthesis. Functionally, cell wall formation. This Nitrobacter hamburgensis (strain DSM 10229 / NCIMB 13809 / X14) protein is UDP-N-acetylenolpyruvoylglucosamine reductase.